A 457-amino-acid polypeptide reads, in one-letter code: Transcription factor PCF7 (457 aa).

Positions 58-84 form a coiled coil; sequence STLHYLLQEKERAQQAHEQLQIYQQQQ. A disordered region spans residues 95 to 121; the sequence is RQPASRGPGGGGGGGDGGGSSGESTPV. Residues 101–115 show a composition bias toward gly residues; that stretch reads GPGGGGGGGDGGGSS. Positions 140-198 constitute a TCP domain; that stretch reads RKDRHSKVCTARGLRDRRVRLAAHTAIRFYDVQDRLGYDRPSKAVDWLMRNAKAAIDEL. 2 disordered regions span residues 199 to 231 and 263 to 299; these read PDRA…GFGN and KSLF…SNQQ. A compositionally biased stretch (polar residues) spans 212–230; the sequence is STEQPEGTEQANSTSYGFG. Residues 268–278 are compositionally biased toward low complexity; the sequence is SSSTASGAASA.

In terms of assembly, forms homodimers and heterodimers.

The protein resides in the nucleus. Transcription activator. Binds the promoter core sequence 5'-GGNCC-3'. The chain is Transcription factor PCF7 (PCF7) from Oryza sativa subsp. indica (Rice).